The sequence spans 206 residues: Small ribosomal subunit protein uS4 (206 aa).

Residues 96 to 156 (SRLDNVVYRM…EKSKKQLRIQ (61 aa)) enclose the S4 RNA-binding domain.

This sequence belongs to the universal ribosomal protein uS4 family. Part of the 30S ribosomal subunit. Contacts protein S5. The interaction surface between S4 and S5 is involved in control of translational fidelity.

Its function is as follows. One of the primary rRNA binding proteins, it binds directly to 16S rRNA where it nucleates assembly of the body of the 30S subunit. Functionally, with S5 and S12 plays an important role in translational accuracy. This Francisella philomiragia subsp. philomiragia (strain ATCC 25017 / CCUG 19701 / FSC 153 / O#319-036) protein is Small ribosomal subunit protein uS4.